The sequence spans 317 residues: Ribose-phosphate pyrophosphokinase A (317 aa).

Residues aspartate 130, histidine 132, and aspartate 145 each contribute to the Mg(2+) site. Positions lysine 212 to glycine 227 are binding of phosphoribosylpyrophosphate.

It belongs to the ribose-phosphate pyrophosphokinase family. Mg(2+) serves as cofactor.

It catalyses the reaction D-ribose 5-phosphate + ATP = 5-phospho-alpha-D-ribose 1-diphosphate + AMP + H(+). The protein operates within metabolic intermediate biosynthesis; 5-phospho-alpha-D-ribose 1-diphosphate biosynthesis; 5-phospho-alpha-D-ribose 1-diphosphate from D-ribose 5-phosphate (route I): step 1/1. The protein is Ribose-phosphate pyrophosphokinase A (prsA) of Dictyostelium discoideum (Social amoeba).